Consider the following 518-residue polypeptide: GMP synthase [glutamine-hydrolyzing] (518 aa).

In terms of domain architecture, Glutamine amidotransferase type-1 spans 6–200 (RLLIIDFGSQ…FVRLAGFKGD (195 aa)). Cys-84 (nucleophile) is an active-site residue. Active-site residues include His-175 and Glu-177. In terms of domain architecture, GMPS ATP-PPase spans 201–393 (WTMGAYREEA…LGLPESFIGR (193 aa)). 228 to 234 (SGGVDSS) contributes to the ATP binding site.

As to quaternary structure, homodimer.

It carries out the reaction XMP + L-glutamine + ATP + H2O = GMP + L-glutamate + AMP + diphosphate + 2 H(+). The protein operates within purine metabolism; GMP biosynthesis; GMP from XMP (L-Gln route): step 1/1. In terms of biological role, catalyzes the synthesis of GMP from XMP. The sequence is that of GMP synthase [glutamine-hydrolyzing] from Cereibacter sphaeroides (strain ATCC 17023 / DSM 158 / JCM 6121 / CCUG 31486 / LMG 2827 / NBRC 12203 / NCIMB 8253 / ATH 2.4.1.) (Rhodobacter sphaeroides).